Reading from the N-terminus, the 150-residue chain is MVLCFPLLLLLLVLWGPVCLLHAWPKHLTRAHWFEIQHIQPSPLQCNRAMSGINNYTQHCKHQNTFLHDSFQNVAAVCDLLSIICKNRQHNCHQSSKPVNMTDCRLTSGKYPQCRYSTAAQYKFFIVACDPPQKSDPPYKLVPVHLDSIL.

An N-terminal signal peptide occupies residues 1 to 23 (MVLCFPLLLLLLVLWGPVCLLHA). Histidine 38 (proton acceptor) is an active-site residue. 4 disulfide bridges follow: cysteine 46–cysteine 104, cysteine 60–cysteine 114, cysteine 78–cysteine 129, and cysteine 85–cysteine 92. Residue asparagine 55 is glycosylated (N-linked (GlcNAc...) asparagine). Residues 61-65 (KHQNT) and lysine 86 each bind substrate. Residue asparagine 100 is glycosylated (N-linked (GlcNAc...) asparagine). Arginine 105 is a binding site for substrate. Histidine 145 serves as the catalytic Proton donor.

Belongs to the pancreatic ribonuclease family. Interacts (via N-terminus) with bacterial lipopolysaccharide (LPS).

It is found in the secreted. It localises to the lysosome. The protein resides in the cytoplasmic granule. Ribonuclease which shows a preference for the pyrimidines uridine and cytosine. Has potent antibacterial activity against a range of Gram-positive and Gram-negative bacteria, including P.aeruginosa, A.baumanii, M.luteus, S.aureus, E.faecalis, E.faecium, S.saprophyticus and E.coli. Causes loss of bacterial membrane integrity, and also promotes agglutination of Gram-negative bacteria. Probably contributes to urinary tract sterility. Bactericidal activity is independent of RNase activity. The polypeptide is Ribonuclease K6 (RNASE6) (Papio hamadryas (Hamadryas baboon)).